The sequence spans 249 residues: 1-(5-phosphoribosyl)-5-[(5-phosphoribosylamino)methylideneamino] imidazole-4-carboxamide isomerase (249 aa).

Aspartate 8 functions as the Proton acceptor in the catalytic mechanism. The active-site Proton donor is the aspartate 130.

Belongs to the HisA/HisF family.

Its subcellular location is the cytoplasm. It catalyses the reaction 1-(5-phospho-beta-D-ribosyl)-5-[(5-phospho-beta-D-ribosylamino)methylideneamino]imidazole-4-carboxamide = 5-[(5-phospho-1-deoxy-D-ribulos-1-ylimino)methylamino]-1-(5-phospho-beta-D-ribosyl)imidazole-4-carboxamide. Its pathway is amino-acid biosynthesis; L-histidine biosynthesis; L-histidine from 5-phospho-alpha-D-ribose 1-diphosphate: step 4/9. This Chromohalobacter salexigens (strain ATCC BAA-138 / DSM 3043 / CIP 106854 / NCIMB 13768 / 1H11) protein is 1-(5-phosphoribosyl)-5-[(5-phosphoribosylamino)methylideneamino] imidazole-4-carboxamide isomerase.